The sequence spans 112 residues: UPF0122 protein CPE1714 (112 aa).

This sequence belongs to the UPF0122 family.

Its function is as follows. Might take part in the signal recognition particle (SRP) pathway. This is inferred from the conservation of its genetic proximity to ftsY/ffh. May be a regulatory protein. The sequence is that of UPF0122 protein CPE1714 from Clostridium perfringens (strain 13 / Type A).